We begin with the raw amino-acid sequence, 146 residues long: Large ribosomal subunit protein uL15 (146 aa).

The segment covering M1 to R13 has biased composition (basic and acidic residues). The interval M1–R47 is disordered. Over residues R21–A31 the composition is skewed to gly residues.

It belongs to the universal ribosomal protein uL15 family. In terms of assembly, part of the 50S ribosomal subunit.

Its function is as follows. Binds to the 23S rRNA. In Clostridium kluyveri (strain NBRC 12016), this protein is Large ribosomal subunit protein uL15.